The following is a 267-amino-acid chain: Short chain dehydrogenase claC (267 aa).

4 residues coordinate NADP(+): Ile27, Asp73, Asn100, and Arg133. Active-site proton donor residues include Ser149 and Ser150. Residues Tyr164, Lys168, and Thr199 each contribute to the NADP(+) site. The active-site Proton acceptor is the Tyr164. The active-site Lowers pKa of active site Tyr is the Lys168.

This sequence belongs to the short-chain dehydrogenases/reductases (SDR) family.

It functions in the pathway pigment biosynthesis. Its function is as follows. Non-reducing polyketide synthase; part of the gene cluster that mediates the biosynthesis of the bianthraquinone cladofulvin, a conidial pigment not required for virulence but that plays a role in fitness and resistance to environmental stresses including UV light and low-temperature stress. The pathway begins with the synthesis of atrochrysone thioester by the polyketide synthase (PKS) claG. The atrochrysone carboxyl ACP thioesterase claF then breaks the thioester bond and releases the atrochrysone carboxylic acid from claG. This compound is decarboxylated by claH to yield emodin, which is further converted to chrysophanol hydroquinone by the reductase claC and the dehydratase claB. The cytochrome monooxygenase P450 claM then catalyzes the dimerization of nataloe-emodin to cladofulvin. The sequence is that of Short chain dehydrogenase claC from Passalora fulva (Tomato leaf mold).